The chain runs to 410 residues: Peptidase T (410 aa).

His-78 contributes to the Zn(2+) binding site. Asp-80 is a catalytic residue. Asp-140 contributes to the Zn(2+) binding site. Glu-174 functions as the Proton acceptor in the catalytic mechanism. Residues Glu-175, Asp-197, and His-379 each coordinate Zn(2+).

Belongs to the peptidase M20B family. Zn(2+) serves as cofactor.

It localises to the cytoplasm. It catalyses the reaction Release of the N-terminal residue from a tripeptide.. Functionally, cleaves the N-terminal amino acid of tripeptides. This is Peptidase T from Vibrio atlanticus (strain LGP32) (Vibrio splendidus (strain Mel32)).